A 462-amino-acid polypeptide reads, in one-letter code: Myb-like transcriptional regulator mfmK (462 aa).

HTH myb-type domains are found at residues 1–54 (MARL…WWNS), 56–110 (ADGT…DPGI), and 113–162 (CDWT…LKHE). 3 consecutive DNA-binding regions (H-T-H motif) follow at residues 32–52 (WRDLAKSVPGRSNKDCRRRWW), 83–106 (WSRVSRAIRSRNPDQCSSHWSQVL), and 134–158 (WATIAASHVPPRTRLALKNRYSTLR). The span at 159–175 (LKHENESKRESTIRKSV) shows a compositional bias: basic and acidic residues. Disordered regions lie at residues 159-184 (LKHENESKRESTIRKSVETPPSNFEP), 216-262 (DEEE…VDNG), and 374-408 (STTTGMDSSSAPGSRDTPPSMHFGTSASTTPRTSI). Over residues 216–235 (DEEEDDDDDDEDNEEDDGDD) the composition is skewed to acidic residues. Composition is skewed to polar residues over residues 374 to 385 (STTTGMDSSSAP) and 396 to 408 (FGTSASTTPRTSI).

Its subcellular location is the nucleus. In terms of biological role, myb-like transcriptional regulator; part of the gene cluster that mediates the biosynthesis of the phthalide-terpenoid hybrid 11'-O-desmethylfendlerol. The polypeptide is Myb-like transcriptional regulator mfmK (Annulohypoxylon moriforme (Filamentous fungus)).